The sequence spans 362 residues: Alanine racemase (362 aa).

The active-site Proton acceptor; specific for D-alanine is Lys33. Lys33 bears the N6-(pyridoxal phosphate)lysine mark. Arg129 is a binding site for substrate. The Proton acceptor; specific for L-alanine role is filled by Tyr254. Residue Met302 coordinates substrate.

It belongs to the alanine racemase family. It depends on pyridoxal 5'-phosphate as a cofactor.

The enzyme catalyses L-alanine = D-alanine. It functions in the pathway amino-acid biosynthesis; D-alanine biosynthesis; D-alanine from L-alanine: step 1/1. Its function is as follows. Catalyzes the interconversion of L-alanine and D-alanine. May also act on other amino acids. The polypeptide is Alanine racemase (alr) (Xylella fastidiosa (strain 9a5c)).